The sequence spans 213 residues: Thymidylate kinase (213 aa).

An ATP-binding site is contributed by 10–17 (GLEGAGKT).

This sequence belongs to the thymidylate kinase family.

The catalysed reaction is dTMP + ATP = dTDP + ADP. Its function is as follows. Phosphorylation of dTMP to form dTDP in both de novo and salvage pathways of dTTP synthesis. In Enterobacter sp. (strain 638), this protein is Thymidylate kinase.